The following is a 191-amino-acid chain: Cathelicidin-related antimicrobial peptide Na_CRAMP (191 aa).

A signal peptide spans 1–22; it reads MEGFFWKTLLVVGALTISGTSS. Positions 23–161 are excised as a propeptide; sequence FPHKPLTYEE…DQPKRVKRFK (139 aa). Cystine bridges form between C81–C92 and C103–C120. Residues 126–154 are disordered; the sequence is EEEQKQEEGNEEEKEVEKEEKEEDQKDQP. Residues 140–154 are compositionally biased toward basic and acidic residues; that stretch reads EVEKEEKEEDQKDQP.

It belongs to the cathelicidin family. As to expression, expressed by the venom gland.

Its subcellular location is the secreted. It localises to the target cell membrane. Potent antimicrobial peptide against most of Gram-negative bacteria, some Gram-positive bacteria (Bacillus) and some fungi. Adopts an amphipathic alpha helical conformation, that may allow to partition into the target membrane. No hemolytic and cytotoxic activities have been observed on mammalian cells. The polypeptide is Cathelicidin-related antimicrobial peptide Na_CRAMP (Naja atra (Chinese cobra)).